A 74-amino-acid polypeptide reads, in one-letter code: MEGDLAHIGAGLAAIGSGAAAIGVGNVAGNFLAGALRNPSAAASQTATLFIGIAFAEALGIFAFLVALLLMFAV.

Helical transmembrane passes span 5–25 (LAHI…IGVG) and 49–69 (LFIG…VALL).

The protein belongs to the ATPase C chain family. As to quaternary structure, F-type ATPases have 2 components, F(1) - the catalytic core - and F(0) - the membrane proton channel. F(1) has five subunits: alpha(3), beta(3), gamma(1), delta(1), epsilon(1). F(0) has three main subunits: a(1), b(2) and c(10-14). The alpha and beta chains form an alternating ring which encloses part of the gamma chain. F(1) is attached to F(0) by a central stalk formed by the gamma and epsilon chains, while a peripheral stalk is formed by the delta and b chains.

It localises to the cell inner membrane. Functionally, f(1)F(0) ATP synthase produces ATP from ADP in the presence of a proton or sodium gradient. F-type ATPases consist of two structural domains, F(1) containing the extramembraneous catalytic core and F(0) containing the membrane proton channel, linked together by a central stalk and a peripheral stalk. During catalysis, ATP synthesis in the catalytic domain of F(1) is coupled via a rotary mechanism of the central stalk subunits to proton translocation. In terms of biological role, key component of the F(0) channel; it plays a direct role in translocation across the membrane. A homomeric c-ring of between 10-14 subunits forms the central stalk rotor element with the F(1) delta and epsilon subunits. The polypeptide is ATP synthase subunit c (Ruegeria pomeroyi (strain ATCC 700808 / DSM 15171 / DSS-3) (Silicibacter pomeroyi)).